A 201-amino-acid polypeptide reads, in one-letter code: Molybdenum cofactor guanylyltransferase (201 aa).

GTP contacts are provided by residues 14 to 16 (LAG), Lys31, and Asp104. Asp104 is a Mg(2+) binding site.

Belongs to the MobA family. In terms of assembly, monomer. Mg(2+) serves as cofactor.

Its subcellular location is the cytoplasm. It carries out the reaction Mo-molybdopterin + GTP + H(+) = Mo-molybdopterin guanine dinucleotide + diphosphate. Its function is as follows. Transfers a GMP moiety from GTP to Mo-molybdopterin (Mo-MPT) cofactor (Moco or molybdenum cofactor) to form Mo-molybdopterin guanine dinucleotide (Mo-MGD) cofactor. This Helicobacter pylori (strain ATCC 700392 / 26695) (Campylobacter pylori) protein is Molybdenum cofactor guanylyltransferase.